A 758-amino-acid polypeptide reads, in one-letter code: Vitamin K-dependent gamma-carboxylase (758 aa).

The interval 1 to 34 is disordered; the sequence is MAVSARPARAPRGSDKVKKDKAAQTSGPRQGSRM. At A2 the chain carries N-acetylalanine. The Cytoplasmic portion of the chain corresponds to 2-60; it reads AVSARPARAPRGSDKVKKDKAAQTSGPRQGSRMGKLLGFEWTDVSSWERLVTLLNRPTD. A compositionally biased stretch (basic and acidic residues) spans 12–22; sequence RGSDKVKKDKA. The chain crosses the membrane as a helical span at residues 61-81; the sequence is PAGLAVFRFLFGLMMVLDIPQ. Residues 82-113 lie on the Lumenal side of the membrane; the sequence is ERGLSSLDRRYLDGLEVCRFPLLDALQPLPLD. C99 and C450 are joined by a disulfide. Residues 114–134 traverse the membrane as a helical segment; the sequence is WMYLIYTIMFLGALGMMLGLC. The Cytoplasmic segment spans residues 135–136; that stretch reads YR. A helical membrane pass occupies residues 137–157; that stretch reads ISCVLFLLPYWYVFLLDKTSW. The Lumenal portion of the chain corresponds to 158-292; that stretch reads NNHSYLYGLL…VSYFHCMNSQ (135 aa). Residues 293–313 traverse the membrane as a helical segment; the sequence is LFSIGMFPYVMLASSPLFCSP. At 314-363 the chain is on the cytoplasmic side; sequence EWPRKLVAHCPKKLQELLPLRTAPQPSTSCMYKRSRARGSQKPGLRHKLS. Residues 364-384 form a helical membrane-spanning segment; it reads TAFTLLYLLEQLFLPYSHFLT. Residues 385 to 758 are Lumenal-facing; that stretch reads QGYNNWTNGL…PDSHPVHSEF (374 aa). Positions 727 to 758 are disordered; it reads PFEPAGEPSPVNTDSSNPNPPEPDSHPVHSEF. Positions 749 to 758 are enriched in basic and acidic residues; sequence PDSHPVHSEF.

In terms of assembly, monomer. May interact with CALU. In terms of processing, the N-terminus is blocked.

Its subcellular location is the endoplasmic reticulum membrane. The enzyme catalyses 4-carboxy-L-glutamyl-[protein] + 2,3-epoxyphylloquinone + H2O + H(+) = phylloquinol + L-glutamyl-[protein] + CO2 + O2. Functionally, mediates the vitamin K-dependent carboxylation of glutamate residues to calcium-binding gamma-carboxyglutamate (Gla) residues with the concomitant conversion of the reduced hydroquinone form of vitamin K to vitamin K epoxide. Catalyzes gamma-carboxylation of various proteins, such as blood coagulation factors (F2, F7, F9 and F10), osteocalcin (BGLAP) or matrix Gla protein (MGP). This is Vitamin K-dependent gamma-carboxylase (GGCX) from Bos taurus (Bovine).